The primary structure comprises 161 residues: Regulator of ribonuclease activity A (161 aa).

This sequence belongs to the RraA family. As to quaternary structure, homotrimer. Binds to both RNA-binding sites in the C-terminal region of Rne and to RhlB.

The protein localises to the cytoplasm. Functionally, globally modulates RNA abundance by binding to RNase E (Rne) and regulating its endonucleolytic activity. Can modulate Rne action in a substrate-dependent manner by altering the composition of the degradosome. Modulates RNA-binding and helicase activities of the degradosome. This Yersinia pseudotuberculosis serotype O:1b (strain IP 31758) protein is Regulator of ribonuclease activity A.